A 309-amino-acid polypeptide reads, in one-letter code: Sulfate adenylyltransferase subunit 2 (309 aa).

Belongs to the PAPS reductase family. CysD subfamily. As to quaternary structure, heterodimer composed of CysD, the smaller subunit, and CysN.

It carries out the reaction sulfate + ATP + H(+) = adenosine 5'-phosphosulfate + diphosphate. It participates in sulfur metabolism; hydrogen sulfide biosynthesis; sulfite from sulfate: step 1/3. Functionally, with CysN forms the ATP sulfurylase (ATPS) that catalyzes the adenylation of sulfate producing adenosine 5'-phosphosulfate (APS) and diphosphate, the first enzymatic step in sulfur assimilation pathway. APS synthesis involves the formation of a high-energy phosphoric-sulfuric acid anhydride bond driven by GTP hydrolysis by CysN coupled to ATP hydrolysis by CysD. This Mycolicibacterium vanbaalenii (strain DSM 7251 / JCM 13017 / BCRC 16820 / KCTC 9966 / NRRL B-24157 / PYR-1) (Mycobacterium vanbaalenii) protein is Sulfate adenylyltransferase subunit 2.